Consider the following 99-residue polypeptide: MAQLHRWDFWCFSTKPLGYLDVVQAIEAEVYDAWRQLRQSANPSKAWHQWKSETRKLFQDLDKKLRGQQEAVVHVAHATFTVAEMQYRQCGGEASHIVF.

Residues 35–55 (RQLRQSANPSKAWHQWKSETR) carry the RxLR-dEER motif.

It belongs to the RxLR effector family.

It is found in the secreted. The protein resides in the host nucleus. It localises to the host cytoplasm. Functionally, secreted effector that completely suppresses the host cell death induced by cell death-inducing proteins. The sequence is that of Secreted RxLR effector protein 94 from Plasmopara viticola (Downy mildew of grapevine).